The sequence spans 129 residues: Glycine cleavage system H protein (129 aa).

The Lipoyl-binding domain occupies 24 to 106; the sequence is TYTVGITEHA…YADGWIFKIK (83 aa). Lys-65 is subject to N6-lipoyllysine.

It belongs to the GcvH family. In terms of assembly, the glycine cleavage system is composed of four proteins: P, T, L and H. It depends on (R)-lipoate as a cofactor.

Its function is as follows. The glycine cleavage system catalyzes the degradation of glycine. The H protein shuttles the methylamine group of glycine from the P protein to the T protein. This chain is Glycine cleavage system H protein, found in Salmonella arizonae (strain ATCC BAA-731 / CDC346-86 / RSK2980).